The primary structure comprises 272 residues: MTVLDDIIVGVKEDMEVRRGLVSLAELKERAANAAPARDAWAALGGPSSIRNDLKVIAEIKRRSPSKGDLASIADPASLAVQYADGGASVISVLTEQRRFGGSLADFDAVRAAVETPLLRKDFTVDEYQIWEARAHGADLILLIVAALSDAELADFSALSHELGMNVLVETHTEEEIERAVAAQAKIIGINVRNLKTLDVDRSVFGSLAGLIPAESVIVAESGVRGPEDVSHYAAGGANAILVGEALVSDSTPRERITEFKAAGAAAIAVRN.

The protein belongs to the TrpC family.

The catalysed reaction is 1-(2-carboxyphenylamino)-1-deoxy-D-ribulose 5-phosphate + H(+) = (1S,2R)-1-C-(indol-3-yl)glycerol 3-phosphate + CO2 + H2O. It participates in amino-acid biosynthesis; L-tryptophan biosynthesis; L-tryptophan from chorismate: step 4/5. The polypeptide is Indole-3-glycerol phosphate synthase (Paenarthrobacter aurescens (strain TC1)).